The chain runs to 575 residues: Potassium-transporting ATPase potassium-binding subunit (575 aa).

Helical transmembrane passes span 3–23, 69–89, 136–156, 178–198, 266–286, 293–313, 340–360, 367–387, 391–411, 431–451, 498–518, and 543–563; these read FEGV…VPFF, AVLA…LLQG, CFQF…IAFI, ILMP…VPQS, LLEI…FGVL, GWVL…VAAL, FGWA…TGAV, LTPL…IWGG, GIAY…LMVG, IIFL…LAIP, VVLL…AGGL, and AGTI…LGPI.

The protein belongs to the KdpA family. As to quaternary structure, the system is composed of three essential subunits: KdpA, KdpB and KdpC.

The protein resides in the cell inner membrane. Its function is as follows. Part of the high-affinity ATP-driven potassium transport (or Kdp) system, which catalyzes the hydrolysis of ATP coupled with the electrogenic transport of potassium into the cytoplasm. This subunit binds the periplasmic potassium ions and delivers the ions to the membrane domain of KdpB through an intramembrane tunnel. The sequence is that of Potassium-transporting ATPase potassium-binding subunit from Gloeobacter violaceus (strain ATCC 29082 / PCC 7421).